The primary structure comprises 984 residues: MTFSKTRNKIIFLLFLIIINIFNINAYIKDENEDDLSLLISTLDGNIYSFNYESGELNWDLKPNGGDSLYSTSQFDRKQQQSTSTSTEITKSSPSILIPTLDGSGLLFQYSNDRLHQVPFSLQELVNTSPLFLKELEDKSSTSSTSTTSESSKDENKVTMFIGNKKTSITVVDSQTGEIIKSMSKDGLWLTDEDDCPVNIIPDEALMFTRSDYQIIALDPKSGVEKWNLSVGEYIPHSTKSFYNSEISLNFEGLIEVASLSQRMYKIYIKKPEKTVVGISHNYWEHILTSSPVSIYAYSSKKHILKKLDFHRKVSPYSNSLIPVASTDLMIPSNFDRTFMFDDYYGQLFIVSPPSNNNNNNNNNNNNNNNNNNNNNNNNNNNNNNNNNNKNNNNNNKNESDKSNLTPLTPYDPSKPNGANNNNNNNNDLLDSNKLKNYDIYLYSSIVILITSIIVFIRSKKNFNLINVNNNNNQNNNQNSNQNNNINNKKTPKKKKKKQKNKNNKNNNDEDDENEIENYNDNQNDLIDEFISTNSVIQQQQQQQQQLINSSNKINNGSGKIILDNGNVKIGKLEIITNKILGTGSCGTIVYEGKMEGRKVAVKRMLSQFVKFADREVSILIHSDEHTNVVRYYAKEEDDEFIYLAISFCQKSLDMYVQQTLSLQISPTDSPSIQSSNNNGNGNNGNNNNNNQIIIDNKTKQMILELFKGLEHLHSLNIVHRDIKPHNVLIDPNNRVKISDMGLGKLLDNDDQSLTFTSDSHGWQPAEYLNGTNRNTKKVDIFSLGCVVYYLLTGAHPFGHRYNREKNVLKGKFDIDQIKHLPDIHQLVHSMIQFEPEKRPDIGECINHPFFWEVHKKLSFLVAASDYLEFEKPTSPLNLEIDSHVDLVTDGSGDWWLKIDQVLIDNIGRYRKYNGKSIRDLLRVIRNKFNHYRDLSPEEQTCLGILPDGFFNYFDLKFPQLFIVTYLFILKNLKNDQYFVQYYY.

An N-terminal signal peptide occupies residues 1 to 26 (MTFSKTRNKIIFLLFLIIINIFNINA). At 27-436 (YIKDENEDDL…NDLLDSNKLK (410 aa)) the chain is on the extracellular side. Disordered regions lie at residues 70–91 (YSTS…EITK) and 137–157 (EDKS…DENK). Low complexity-rich tracts occupy residues 82–91 (STSTSTEITK) and 141–150 (STSSTSTTSE). Asn-228 is a glycosylation site (N-linked (GlcNAc...) asparagine). The segment at 352–427 (SPPSNNNNNN…GANNNNNNNN (76 aa)) is disordered. The span at 356-397 (NNNNNNNNNNNNNNNNNNNNNNNNNNNNNNNNNNKNNNNNNK) shows a compositional bias: low complexity. Asn-398 carries N-linked (GlcNAc...) asparagine glycosylation. A helical membrane pass occupies residues 437 to 457 (NYDIYLYSSIVILITSIIVFI). Over 458 to 984 (RSKKNFNLIN…NDQYFVQYYY (527 aa)) the chain is Cytoplasmic. Positions 467 to 533 (NVNNNNNQNN…NDLIDEFIST (67 aa)) form a coiled coil. The span at 472–489 (NNQNNNQNSNQNNNINNK) shows a compositional bias: low complexity. The disordered stretch occupies residues 472–518 (NNQNNNQNSNQNNNINNKKTPKKKKKKQKNKNNKNNNDEDDENEIEN). Residues 490-503 (KTPKKKKKKQKNKN) show a composition bias toward basic residues. The span at 509 to 518 (DEDDENEIEN) shows a compositional bias: acidic residues. The Protein kinase domain occupies 575–851 (IITNKILGTG…IGECINHPFF (277 aa)). ATP contacts are provided by residues 581 to 589 (LGTGSCGTI) and Lys-603. Residues 667 to 676 (PTDSPSIQSS) show a composition bias toward polar residues. The tract at residues 667-692 (PTDSPSIQSSNNNGNGNNGNNNNNNQ) is disordered. Positions 677 to 691 (NNNGNGNNGNNNNNN) are enriched in low complexity. Asp-722 (proton acceptor) is an active-site residue. In terms of domain architecture, KEN spans 854–984 (VHKKLSFLVA…NDQYFVQYYY (131 aa)).

The protein belongs to the protein kinase superfamily. Ser/Thr protein kinase family.

It is found in the membrane. It carries out the reaction L-seryl-[protein] + ATP = O-phospho-L-seryl-[protein] + ADP + H(+). It catalyses the reaction L-threonyl-[protein] + ATP = O-phospho-L-threonyl-[protein] + ADP + H(+). The polypeptide is Probable serine/threonine-protein kinase ireA (ireA) (Dictyostelium discoideum (Social amoeba)).